The primary structure comprises 252 residues: Cyclic di-GMP binding protein VCA0042 (252 aa).

The span at 1-11 (MNSRPAEKIDN) shows a compositional bias: basic and acidic residues. A disordered region spans residues 1–24 (MNSRPAEKIDNNDGQTETPRSKTV). Residues 12 to 24 (NDGQTETPRSKTV) are compositionally biased toward polar residues. Residues 134 to 233 (QLRKEPRFEL…EEGRNNAKNL (100 aa)) form the PilZ domain.

The protein belongs to the YcgR family. As to quaternary structure, dimer.

The protein localises to the bacterial flagellum basal body. In terms of biological role, may act as a flagellar brake, regulating swimming and swarming in a bis-(3'-5') cyclic diguanylic acid (c-di-GMP)-dependent manner. Increasing levels of c-di-GMP lead to decreased motility (Potential). Binds bis-(3'-5') cyclic diguanylic acid (c-di-GMP) with a dissociation constant of 170 nM in the presence of 10 mM KCl and with 100 nM in its absence. Binds 1 to 2 c-di-GMP per subunit. Only 1 c-di-GMP is seen in the wild-type crystal, while 2 are seen in the mutant. Depending on the concentration of K(+) stoichiometries of 1:1, 1.43:1 and 2:1 are determined by isothermal titration calorimetry. The polypeptide is Cyclic di-GMP binding protein VCA0042 (Vibrio cholerae serotype O1 (strain ATCC 39315 / El Tor Inaba N16961)).